The chain runs to 383 residues: Succinyl-diaminopimelate desuccinylase (383 aa).

Residue H69 coordinates Zn(2+). D71 is an active-site residue. A Zn(2+)-binding site is contributed by D103. The active-site Proton acceptor is the E137. The Zn(2+) site is built by E138, E166, and H357.

This sequence belongs to the peptidase M20A family. DapE subfamily. As to quaternary structure, homodimer. Requires Zn(2+) as cofactor. Co(2+) is required as a cofactor.

The enzyme catalyses N-succinyl-(2S,6S)-2,6-diaminopimelate + H2O = (2S,6S)-2,6-diaminopimelate + succinate. The protein operates within amino-acid biosynthesis; L-lysine biosynthesis via DAP pathway; LL-2,6-diaminopimelate from (S)-tetrahydrodipicolinate (succinylase route): step 3/3. Its function is as follows. Catalyzes the hydrolysis of N-succinyl-L,L-diaminopimelic acid (SDAP), forming succinate and LL-2,6-diaminopimelate (DAP), an intermediate involved in the bacterial biosynthesis of lysine and meso-diaminopimelic acid, an essential component of bacterial cell walls. This Rickettsia prowazekii (strain Madrid E) protein is Succinyl-diaminopimelate desuccinylase.